The primary structure comprises 212 residues: Adenylate kinase (212 aa).

Position 10–15 (10–15) interacts with ATP; sequence GAGKGT. The NMP stretch occupies residues 30–59; the sequence is STGDMFRAAMANQTEMGRLAKSYIDKGELV. AMP contacts are provided by residues Thr31, Arg36, 57-59, 86-89, and Gln93; these read ELV and GYPR. Residues 127-159 are LID; that stretch reads GRIINRKTGETFHKVFNPPVDYKEEDYYQREDD. ATP contacts are provided by residues Arg128 and 137 to 138; that span reads TF. AMP is bound by residues Arg156 and Arg167. Position 195 (Gln195) interacts with ATP.

The protein belongs to the adenylate kinase family. Monomer.

The protein resides in the cytoplasm. It catalyses the reaction AMP + ATP = 2 ADP. The protein operates within purine metabolism; AMP biosynthesis via salvage pathway; AMP from ADP: step 1/1. Its function is as follows. Catalyzes the reversible transfer of the terminal phosphate group between ATP and AMP. Plays an important role in cellular energy homeostasis and in adenine nucleotide metabolism. This chain is Adenylate kinase, found in Streptococcus pyogenes serotype M12 (strain MGAS2096).